The primary structure comprises 76 residues: Frizzled-3 (76 aa).

Over 1–5 (YPERP) the chain is Cytoplasmic. A helical transmembrane segment spans residues 6–26 (IIFYAVCYMMVSLIFFIGFLL). At 27-54 (EDRVACNASSPAQYKASTVTQGSHNKAC) the chain is on the extracellular side. A glycan (N-linked (GlcNAc...) asparagine) is linked at N33. Residues 55-75 (TMLFMVLYFFTMAGSVWWVIL) form a helical membrane-spanning segment. R76 is a topological domain (cytoplasmic).

This sequence belongs to the G-protein coupled receptor Fz/Smo family.

Its subcellular location is the membrane. The protein localises to the cell membrane. It localises to the cell surface. The protein resides in the apical cell membrane. Receptor for Wnt proteins. Most of frizzled receptors are coupled to the beta-catenin canonical signaling pathway, which leads to the activation of disheveled proteins, inhibition of GSK-3 kinase, nuclear accumulation of beta-catenin and activation of Wnt target genes. A second signaling pathway involving PKC and calcium fluxes has been seen for some family members, but it is not yet clear if it represents a distinct pathway or if it can be integrated in the canonical pathway, as PKC seems to be required for Wnt-mediated inactivation of GSK-3 kinase. Both pathways seem to involve interactions with G-proteins. May be involved in transduction and intercellular transmission of polarity information during tissue morphogenesis and/or in differentiated tissues. Plays a role in controlling early axon growth and guidance processes necessary for the formation of a subset of central and peripheral major fiber tracts. Involved in the migration of cranial neural crest cells. May also be implicated in the transmission of sensory information from the trunk and limbs to the brain. Controls commissural sensory axons guidance after midline crossing along the anterior-posterior axis in the developing spinal cord in a Wnt-dependent signaling pathway. Together with FZD6, is involved in the neural tube closure and plays a role in the regulation of the establishment of planar cell polarity (PCP). Promotes neurogenesis by maintaining sympathetic neuroblasts within the cell cycle in a beta-catenin-dependent manner. The chain is Frizzled-3 (FZD3) from Gallus gallus (Chicken).